Reading from the N-terminus, the 262-residue chain is 1-(5-phosphoribosyl)-5-[(5-phosphoribosylamino)methylideneamino] imidazole-4-carboxamide isomerase (262 aa).

The active-site Proton acceptor is aspartate 8. Catalysis depends on aspartate 130, which acts as the Proton donor.

Belongs to the HisA/HisF family.

It localises to the cytoplasm. It catalyses the reaction 1-(5-phospho-beta-D-ribosyl)-5-[(5-phospho-beta-D-ribosylamino)methylideneamino]imidazole-4-carboxamide = 5-[(5-phospho-1-deoxy-D-ribulos-1-ylimino)methylamino]-1-(5-phospho-beta-D-ribosyl)imidazole-4-carboxamide. It functions in the pathway amino-acid biosynthesis; L-histidine biosynthesis; L-histidine from 5-phospho-alpha-D-ribose 1-diphosphate: step 4/9. The protein is 1-(5-phosphoribosyl)-5-[(5-phosphoribosylamino)methylideneamino] imidazole-4-carboxamide isomerase of Chloroherpeton thalassium (strain ATCC 35110 / GB-78).